The following is a 78-amino-acid chain: Exodeoxyribonuclease 7 small subunit (78 aa).

This sequence belongs to the XseB family. Heterooligomer composed of large and small subunits.

It localises to the cytoplasm. It catalyses the reaction Exonucleolytic cleavage in either 5'- to 3'- or 3'- to 5'-direction to yield nucleoside 5'-phosphates.. Functionally, bidirectionally degrades single-stranded DNA into large acid-insoluble oligonucleotides, which are then degraded further into small acid-soluble oligonucleotides. The protein is Exodeoxyribonuclease 7 small subunit of Oceanobacillus iheyensis (strain DSM 14371 / CIP 107618 / JCM 11309 / KCTC 3954 / HTE831).